A 101-amino-acid polypeptide reads, in one-letter code: Histone H1-like protein EM6 (101 aa).

2 stretches are compositionally biased toward basic residues: residues 1 to 35 (AKKR…HVRK) and 58 to 101 (AKKK…RRRR). A disordered region spans residues 1–101 (AKKRSRSRKR…SRTARSRRRR (101 aa)). Tandem repeats lie at residues 3–4 (KR), 5–6 (SR), 7–8 (SR), and 9–10 (KR). Positions 3–22 (KRSRSRKRSASRKRSRSRKR) are 10 X 2 AA approximate tandem repeats of [SK]-R. The 5; approximate repeat unit spans residues 11–12 (SA). A run of 5 repeats spans residues 13-14 (SR), 15-16 (KR), 17-18 (SR), 19-20 (SR), and 21-22 (KR). The globular stretch occupies residues 32–65 (HVRKALAAGMKNHLLAHPKGSNNFILAKKKAPRR).

As to expression, sperm.

It localises to the nucleus. The protein localises to the chromosome. This is Histone H1-like protein EM6 from Ensis minor (Razor shell).